We begin with the raw amino-acid sequence, 412 residues long: Glutamate-1-semialdehyde 2,1-aminomutase (412 aa).

An N6-(pyridoxal phosphate)lysine modification is found at Lys260.

The protein belongs to the class-III pyridoxal-phosphate-dependent aminotransferase family. HemL subfamily. Pyridoxal 5'-phosphate serves as cofactor.

It is found in the cytoplasm. It carries out the reaction (S)-4-amino-5-oxopentanoate = 5-aminolevulinate. It participates in porphyrin-containing compound metabolism; protoporphyrin-IX biosynthesis; 5-aminolevulinate from L-glutamyl-tRNA(Glu): step 2/2. In Methanocorpusculum labreanum (strain ATCC 43576 / DSM 4855 / Z), this protein is Glutamate-1-semialdehyde 2,1-aminomutase.